Consider the following 169-residue polypeptide: Positive control factor (169 aa).

A DNA-binding region (H-T-H motif) is located at residues 132–157 (YERIADLLGVKKSTVQTTIKRASLKM).

In terms of biological role, positive regulatory protein that acts at the late promoter PL. This Bacillus subtilis (strain 168) protein is Positive control factor (xpf).